A 245-amino-acid chain; its full sequence is Small ribosomal subunit protein uS3 (245 aa).

The KH type-2 domain maps to 21–92 (LNEFLTRELA…SVELYAEKVA (72 aa)). The disordered stretch occupies residues 215–245 (EEILPTTPVSEQKGAKPEVPVMPQGAPVPTA).

It belongs to the universal ribosomal protein uS3 family.

It localises to the cytoplasm. Its subcellular location is the nucleus. It is found in the nucleolus. The protein localises to the mitochondrion inner membrane. The protein resides in the cytoskeleton. It localises to the spindle. It catalyses the reaction 2'-deoxyribonucleotide-(2'-deoxyribose 5'-phosphate)-2'-deoxyribonucleotide-DNA = a 3'-end 2'-deoxyribonucleotide-(2,3-dehydro-2,3-deoxyribose 5'-phosphate)-DNA + a 5'-end 5'-phospho-2'-deoxyribonucleoside-DNA + H(+). In terms of biological role, component of the small ribosomal subunit. The ribosome is a large ribonucleoprotein complex responsible for the synthesis of proteins in the cell. Has endonuclease activity and plays a role in repair of damaged DNA. Also involved in other processes including regulation of transcription, translation of its cognate mRNA, spindle formation and chromosome movement during mitosis, and apoptosis. This chain is Small ribosomal subunit protein uS3 (rps3), found in Ictalurus punctatus (Channel catfish).